We begin with the raw amino-acid sequence, 93 residues long: MSEDVRLVAWVRGQVQGVGFRWFTRARALELGGMSGFALNLGDGRVQVVAEGPRERCEGLLEWLRGDDTPGRVDGVTEIWDTPRGGYEGFAIR.

An Acylphosphatase-like domain is found at 6–93; the sequence is RLVAWVRGQV…RGGYEGFAIR (88 aa). Catalysis depends on residues Arg-21 and Asn-40.

It belongs to the acylphosphatase family.

It carries out the reaction an acyl phosphate + H2O = a carboxylate + phosphate + H(+). This Streptomyces coelicolor (strain ATCC BAA-471 / A3(2) / M145) protein is Acylphosphatase (acyP).